Consider the following 347-residue polypeptide: MSRSIDLAVIPGDGIGQEVVAQGLKVLNAVLPQDVKLETKEYDLGAQRWHRTGDTLPDAELEALKGHDAILLGAIGDPSVPSGVLERGLLLKLRFAFDHFINLRPSKLFPNTATPLAGRPDIDFVVVREGTEGPYTGNGGSLRTGTPAEVATEVSLNTAYGVERVVRDAFERAAARPRKKLTLVHKNNVLVYAGHLWKNTFDKVAAEYPQVSTDYLHVDAATIFFVTQPERFDVIVTDNLFGDILTDLAAAVSGGIGLAASGNINPTGAFPSMFEPVHGSAPDIAGQGKADPTATVLSVALLLRHLGYEAEAARIEDAVSADLAERDGSVARTTDEIGDALAVRVAS.

Substrate is bound by residues Arg-94, Arg-104, Arg-128, and Asp-219. Residues Asp-219, Asp-243, and Asp-247 each coordinate Mg(2+). Residue 279–291 coordinates NAD(+); sequence GSAPDIAGQGKAD.

This sequence belongs to the isocitrate and isopropylmalate dehydrogenases family. LeuB type 2 subfamily. Homodimer. Mg(2+) serves as cofactor. Requires Mn(2+) as cofactor.

It is found in the cytoplasm. The enzyme catalyses (2R,3S)-3-isopropylmalate + NAD(+) = 4-methyl-2-oxopentanoate + CO2 + NADH. Its pathway is amino-acid biosynthesis; L-leucine biosynthesis; L-leucine from 3-methyl-2-oxobutanoate: step 3/4. Functionally, catalyzes the oxidation of 3-carboxy-2-hydroxy-4-methylpentanoate (3-isopropylmalate) to 3-carboxy-4-methyl-2-oxopentanoate. The product decarboxylates to 4-methyl-2 oxopentanoate. The sequence is that of 3-isopropylmalate dehydrogenase from Streptomyces griseus subsp. griseus (strain JCM 4626 / CBS 651.72 / NBRC 13350 / KCC S-0626 / ISP 5235).